Consider the following 461-residue polypeptide: NADP-specific glutamate dehydrogenase (461 aa).

Residue lysine 115 is part of the active site.

It belongs to the Glu/Leu/Phe/Val dehydrogenases family. As to quaternary structure, homohexamer.

The catalysed reaction is L-glutamate + NADP(+) + H2O = 2-oxoglutarate + NH4(+) + NADPH + H(+). The polypeptide is NADP-specific glutamate dehydrogenase (GDH) (Penicillium chrysogenum (Penicillium notatum)).